Reading from the N-terminus, the 210-residue chain is Proteasome subunit beta (210 aa).

The propeptide at 1 to 9 (MDNDKHLKG) is removed in mature form; by autocatalysis. Thr-10 functions as the Nucleophile in the catalytic mechanism.

This sequence belongs to the peptidase T1B family. As to quaternary structure, the 20S proteasome core is composed of 14 alpha and 14 beta subunits that assemble into four stacked heptameric rings, resulting in a barrel-shaped structure. The two inner rings, each composed of seven catalytic beta subunits, are sandwiched by two outer rings, each composed of seven alpha subunits. The catalytic chamber with the active sites is on the inside of the barrel. Has a gated structure, the ends of the cylinder being occluded by the N-termini of the alpha-subunits. Is capped at one or both ends by the proteasome regulatory ATPase, PAN.

Its subcellular location is the cytoplasm. It catalyses the reaction Cleavage of peptide bonds with very broad specificity.. The formation of the proteasomal ATPase PAN-20S proteasome complex, via the docking of the C-termini of PAN into the intersubunit pockets in the alpha-rings, triggers opening of the gate for substrate entry. Interconversion between the open-gate and close-gate conformations leads to a dynamic regulation of the 20S proteasome proteolysis activity. Component of the proteasome core, a large protease complex with broad specificity involved in protein degradation. This chain is Proteasome subunit beta, found in Methanohalophilus mahii (strain ATCC 35705 / DSM 5219 / SLP).